The primary structure comprises 484 residues: CUGBP Elav-like family member 2 (484 aa).

2 necessary for nuclear export regions span residues 1–89 (MNGA…PGMH) and 90–178 (HPIQ…EGCS). RRM domains follow at residues 16–99 (IKTF…PADS), 108–188 (RKLF…FADT), and 399–477 (ANLF…LKRS). The tract at residues 188 to 240 (TQKDKEQRRLQQQLAQQMQQLNTATWGNLTGLGGLTPQYLALLQQATSSSNLG) is necessary for splicing activity. The segment at 347–399 (GLTNGTAGTMDALTQAYSGIQQYAAAALPTLYSQSLLQQQSAAGSQKEGPEGA) is necessary for nuclear localization. Residues 426-484 (ISAKVFIDKQTNLSKCFGFVSYDNPVSAQAAIQAMNGFQIGMKRLKVQLKRSKNDSKPY) are necessary for nuclear localization and splicing activity.

It belongs to the CELF/BRUNOL family. As to expression, expressed in heart.

Its subcellular location is the nucleus. The protein localises to the cytoplasm. RNA-binding protein implicated in the regulation of several post-transcriptional events. May be involved in mRNA translation repression and stability. Mediates exon inclusion in TNNT2 pre-mRNA. This chain is CUGBP Elav-like family member 2 (CELF2), found in Gallus gallus (Chicken).